A 526-amino-acid polypeptide reads, in one-letter code: Light-independent protochlorophyllide reductase subunit B (526 aa).

A [4Fe-4S] cluster-binding site is contributed by Asp-36. Asp-290 (proton donor) is an active-site residue. 425–426 (GL) serves as a coordination point for substrate.

The protein belongs to the ChlB/BchB/BchZ family. As to quaternary structure, protochlorophyllide reductase is composed of three subunits; ChlL, ChlN and ChlB. Forms a heterotetramer of two ChlB and two ChlN subunits. [4Fe-4S] cluster serves as cofactor.

The enzyme catalyses chlorophyllide a + oxidized 2[4Fe-4S]-[ferredoxin] + 2 ADP + 2 phosphate = protochlorophyllide a + reduced 2[4Fe-4S]-[ferredoxin] + 2 ATP + 2 H2O. It functions in the pathway porphyrin-containing compound metabolism; chlorophyll biosynthesis (light-independent). Functionally, component of the dark-operative protochlorophyllide reductase (DPOR) that uses Mg-ATP and reduced ferredoxin to reduce ring D of protochlorophyllide (Pchlide) to form chlorophyllide a (Chlide). This reaction is light-independent. The NB-protein (ChlN-ChlB) is the catalytic component of the complex. The polypeptide is Light-independent protochlorophyllide reductase subunit B (Prochlorococcus marinus subsp. pastoris (strain CCMP1986 / NIES-2087 / MED4)).